Here is a 723-residue protein sequence, read N- to C-terminus: MIYQAETLQVKEVQDGVAEILFCAQNSVNKLDLATLASLDKALDALTAHSGLKGVMLTSDKEAFIVGADITEFLGLFAKPEEELDQWLQFANSIFNKLEDLPVPTVAVVKGHTLGGGCECVLATDLRIGDKTTSIGLPETKLGIMPGFGGCVRLPRVIGADSAMEIITQGKACRAEEALKIGLLDAVVDSDRLYASALQTLTDAINEKIDWKARRQQKTSALTLSKLEAMMSFTMAKGLVAQVAGPHYPAPMTAVVTIEEGARFARNQALDIERKHFVKLAKSEEAKALVGLFLNDQYIKGIAKKAAKSANKETQRAAVLGAGIMGGGIAYQSALKGVPVIMKDIAQASLDLGMTEASKLLNKQLERGKIDGFKMAGILASITPSLHYAGIDNADIIVEAVVENPKVKAAVLSEVEEQVSEETVLTSNTSTIPINLLAKSLKRPENFCGMHFFNPVHRMPLVEIIRGEHTSDETINRVVAYAAKMGKSPIVVNDCPGFFVNRVLFPYFGGFSMLLRDGADFTQIDKVMERKFGWPMGPAYLLDVVGIDTAHHAQAVMAQGFPERMGKQGRDAIDALFEANKYGQKNGSGFYTYTMDKKGKPKKAFSDEIVPILAPVCAAQQAFDDQTIIQRMMIPMINEVVLCLQEGIIASAQEADMALVYGLGFPPFRGGVFRYLDSVGIANFVAMAQQHVELGAMYQVPQMLIDMAERGQTFYGAQQQGSI.

An enoyl-CoA hydratase/isomerase region spans residues 1–189 (MIYQAETLQV…KIGLLDAVVD (189 aa)). A substrate-binding site is contributed by Asp-296. Residues 311 to 723 (NKETQRAAVL…FYGAQQQGSI (413 aa)) form a 3-hydroxyacyl-CoA dehydrogenase region. Residues Met-325, Asp-344, 401-403 (VVE), Lys-408, and Ser-430 each bind NAD(+). His-451 acts as the For 3-hydroxyacyl-CoA dehydrogenase activity in catalysis. Asn-454 is a binding site for NAD(+). The substrate site is built by Asn-501 and Tyr-661.

It in the N-terminal section; belongs to the enoyl-CoA hydratase/isomerase family. This sequence in the C-terminal section; belongs to the 3-hydroxyacyl-CoA dehydrogenase family. In terms of assembly, heterotetramer of two alpha chains (FadB) and two beta chains (FadA).

The enzyme catalyses a (3S)-3-hydroxyacyl-CoA + NAD(+) = a 3-oxoacyl-CoA + NADH + H(+). It carries out the reaction a (3S)-3-hydroxyacyl-CoA = a (2E)-enoyl-CoA + H2O. It catalyses the reaction a 4-saturated-(3S)-3-hydroxyacyl-CoA = a (3E)-enoyl-CoA + H2O. The catalysed reaction is (3S)-3-hydroxybutanoyl-CoA = (3R)-3-hydroxybutanoyl-CoA. The enzyme catalyses a (3Z)-enoyl-CoA = a 4-saturated (2E)-enoyl-CoA. It carries out the reaction a (3E)-enoyl-CoA = a 4-saturated (2E)-enoyl-CoA. Its pathway is lipid metabolism; fatty acid beta-oxidation. Its function is as follows. Involved in the aerobic and anaerobic degradation of long-chain fatty acids via beta-oxidation cycle. Catalyzes the formation of 3-oxoacyl-CoA from enoyl-CoA via L-3-hydroxyacyl-CoA. It can also use D-3-hydroxyacyl-CoA and cis-3-enoyl-CoA as substrate. The chain is Fatty acid oxidation complex subunit alpha from Vibrio vulnificus (strain YJ016).